A 525-amino-acid chain; its full sequence is Arylsulfatase G (525 aa).

Positions 1 to 16 are cleaved as a signal peptide; sequence MGWLFLKVLLAGVSFS. Ca(2+)-binding residues include aspartate 44, aspartate 45, and cysteine 84. The active-site Nucleophile is the cysteine 84. Cysteine 84 bears the 3-oxoalanine (Cys) mark. The N-linked (GlcNAc...) asparagine glycan is linked to asparagine 117. Residue lysine 137 coordinates substrate. Residue histidine 139 is part of the active site. Residue serine 162 participates in substrate binding. Asparagine 215 is a glycosylation site (N-linked (GlcNAc...) asparagine). A substrate-binding site is contributed by histidine 251. Residues aspartate 302 and asparagine 303 each coordinate Ca(2+). Residues asparagine 356 and asparagine 497 are each glycosylated (N-linked (GlcNAc...) asparagine).

It belongs to the sulfatase family. It depends on Ca(2+) as a cofactor. Post-translationally, N-glycosylated. N-glycosylated with both high mannose and complex type sugars. In terms of processing, the conversion to 3-oxoalanine (also known as C-formylglycine, FGly), of a serine or cysteine residue in prokaryotes and of a cysteine residue in eukaryotes, is critical for catalytic activity. The 63-kDa precursor undergoes proteolytic processing in two steps, yielding two fragments in the first step (apparent molecular masses of 44 and 18 kDa). In the second step, the 44-kDa fragment is processed further to the 34- and 10-kDa chains. The 10-kDa chain is a cleavage product of the 44-kDa fragment but linked to the 18-kDa chain through a disulfide bridge. In terms of tissue distribution, widely expressed, with very low expression in brain, lung, heart and skeletal muscle.

The protein resides in the lysosome. It catalyses the reaction an aryl sulfate + H2O = a phenol + sulfate + H(+). The catalysed reaction is Hydrolysis of the 3-sulfate groups of the N-sulfo-D-glucosamine 3-O-sulfate units of heparin.. Its activity is regulated as follows. Inhibited by phosphate. The phosphate forms a covalent bond with the active site 3-oxoalanine. In terms of biological role, displays arylsulfatase activity at acidic pH towards artificial substrates, such as p-nitrocatechol sulfate and also, but with a lower activity towards p-nitrophenyl sulfate and 4-methylumbelliferyl sulfate. Catalyzes the hydrolysis of the 3-sulfate groups of the N-sulfo-D-glucosamine 3-O-sulfate units of heparin. The chain is Arylsulfatase G (ARSG) from Homo sapiens (Human).